Here is a 901-residue protein sequence, read N- to C-terminus: Aconitate hydratase A (901 aa).

Cys443, Cys509, and Cys512 together coordinate [4Fe-4S] cluster.

Belongs to the aconitase/IPM isomerase family. Monomer. [4Fe-4S] cluster is required as a cofactor.

The catalysed reaction is citrate = D-threo-isocitrate. It carries out the reaction (2S,3R)-3-hydroxybutane-1,2,3-tricarboxylate = 2-methyl-cis-aconitate + H2O. The protein operates within carbohydrate metabolism; tricarboxylic acid cycle; isocitrate from oxaloacetate: step 2/2. Its pathway is organic acid metabolism; propanoate degradation. Involved in the catabolism of short chain fatty acids (SCFA) via the tricarboxylic acid (TCA)(acetyl degradation route) and probably the 2-methylcitrate cycle I (propionate degradation route). Catalyzes the reversible isomerization of citrate to isocitrate via cis-aconitate. Could catalyze the hydration of 2-methyl-cis-aconitate to yield (2R,3S)-2-methylisocitrate. The apo form of AcnA functions as a RNA-binding regulatory protein. The chain is Aconitate hydratase A (acnA) from Staphylococcus epidermidis (strain ATCC 12228 / FDA PCI 1200).